We begin with the raw amino-acid sequence, 501 residues long: Putative ribose/galactose/methyl galactoside import ATP-binding protein 1 (501 aa).

2 consecutive ABC transporter domains span residues 5–237 (VSLS…VGRQ) and 249–492 (VPGE…MTRS). An ATP-binding site is contributed by 37-44 (GENGAGKS).

It belongs to the ABC transporter superfamily. Carbohydrate importer 2 (CUT2) (TC 3.A.1.2) family.

The protein resides in the cell inner membrane. The enzyme catalyses D-ribose(out) + ATP + H2O = D-ribose(in) + ADP + phosphate + H(+). It catalyses the reaction D-galactose(out) + ATP + H2O = D-galactose(in) + ADP + phosphate + H(+). Part of an ABC transporter complex involved in carbohydrate import. Could be involved in ribose, galactose and/or methyl galactoside import. Responsible for energy coupling to the transport system. This is Putative ribose/galactose/methyl galactoside import ATP-binding protein 1 from Rhizobium meliloti (strain 1021) (Ensifer meliloti).